The primary structure comprises 260 residues: MAKLCAQQVSVVYASRRGALTALENVSMSVGSGEIVVALGASGCGKSTLLSLLAGFQPPTSGRVSVDGVPVAGPGADRGVVFQDDALMPWLNVIENVAFGLRMQGVGRDARHARARDVLRLVKLAGFEQHRIDEISGGMRQRVGLARALAADPSFLLMDEPLGALDALTREHMQTLLLDVWRATGKGVFLITHSVEEAVLLATELLILSPRPGRIVARHALDFARRYAHGEPVRSIKSDPRFTEIHLALVEQLMRETEEV.

Residues 6 to 235 (AQQVSVVYAS…RYAHGEPVRS (230 aa)) enclose the ABC transporter domain. 40–47 (GASGCGKS) contacts ATP.

It belongs to the ABC transporter superfamily. Taurine importer (TC 3.A.1.17.1) family. The complex is composed of two ATP-binding proteins (TauB), two transmembrane proteins (TauC) and a solute-binding protein (TauA).

It localises to the cell inner membrane. The enzyme catalyses taurine(out) + ATP + H2O = taurine(in) + ADP + phosphate + H(+). Part of the ABC transporter complex TauABC involved in taurine import. Responsible for energy coupling to the transport system. This Burkholderia pseudomallei (strain K96243) protein is Taurine import ATP-binding protein TauB.